We begin with the raw amino-acid sequence, 424 residues long: Inhibin beta A chain (424 aa).

An N-terminal signal peptide occupies residues 1–20 (MPLLWLRGFLLASCWIIVRS). Residues 21–308 (SPTPGSGGHS…EEHPHRRRRR (288 aa)) constitute a propeptide that is removed on maturation. N-linked (GlcNAc...) asparagine glycosylation is present at asparagine 165. Disordered stretches follow at residues 178–197 (QQRR…DVGF) and 259–306 (KKKK…HRRR). A compositionally biased stretch (acidic residues) spans 188–197 (AGEEAEDVGF). The span at 263 to 275 (KEEEAEGRKRDGE) shows a compositional bias: basic and acidic residues. 4 disulfide bridges follow: cysteine 312–cysteine 320, cysteine 319–cysteine 389, cysteine 348–cysteine 421, and cysteine 352–cysteine 423.

Belongs to the TGF-beta family. In terms of assembly, dimeric, linked by one or more disulfide bonds. Inhibin A is a dimer of alpha/INHA and beta-A/INHBA. Activin A is a homodimer of beta-A/INHBA. Activin AB is a dimer of beta-A/INHBA and beta-B/INHBB. Interacts with FST and FSTL3; these interactions prevent activin A interaction to its type II receptor. Activin A interacts with ACVR2A. Activin A interacts with BMPR2. Inhibin A interacts with ACVR1; this interaction creates a non-signaling complex (NSC) that inhibits ACVR1-mediated BMP signaling. Inhibin A interacts with ACVR2A.

Its subcellular location is the secreted. In terms of biological role, inhibins/activins are involved in regulating a number of diverse functions such as hypothalamic and pituitary hormone secretion, gonadal hormone secretion, germ cell development and maturation, erythroid differentiation, insulin secretion, nerve cell survival, embryonic axial development or bone growth, depending on their subunit composition. Activin A is a homodimer of INHBA that plays a role in several essential biological processes including embryonic development, stem cell maintenance and differentiation, haematopoiesis, cell proliferation and tissue fibrosis. Signals through type I (such as ACVR1B or ACVR1C) and type II receptors (such as ACVR2A, ACVR2B or BMPR2) which, upon ligand binding, phosphorylate SMAD2 and SMAD3 intracellular signaling mediators that form a complex with SMAD4, translocate to the nucleus and modulate gene expression. Can also activate alternative non-canonical intracellular signaling pathways including the p38 MAPK, extracellular signal-regulated kinases 1/2 (ERK1/2) and c-Jun N-terminal kinases (JNKs) to modulate cell migration and differentiation. Alternatively, promotes osteoblastic differentiation via ACVRL1-SMAD1/5/9 pathway. In addition, can engage the type I receptor ACVR1 to form an ACVR1-activin A-type II receptor non-signaling complex (NSC) that renders receptors unavailable for engagement with BMPs, hence resulting in an apparent inhibition of ACVR1-mediated BMP signaling. Its function is as follows. Inhibin A is a dimer of alpha/INHA and beta-A/INHBA that functions as a feedback regulator in the hypothalamic-pituitary-gonadal (HPG) axis. Inhibits the secretion of FSH from the anterior pituitary gland by acting on pituitary gonadotrope cells. Antagonizes activin A by binding to the proteoglycan, betaglycan, and forming a stable complex with and, thereby, sequestering type II activin receptors while excluding type I receptor. The sequence is that of Inhibin beta A chain (INHBA) from Sus scrofa (Pig).